Reading from the N-terminus, the 416-residue chain is Enterobactin exporter EntS (416 aa).

Residues 1–21 are Cytoplasmic-facing; sequence MNKQSWLLNLSLLKTHPAFRA. Residues 22-42 traverse the membrane as a helical segment; that stretch reads VFLARFISIVSLGLLGVAVPV. Over 43-55 the chain is Periplasmic; sequence QIQMMTHSTWQVG. A helical transmembrane segment spans residues 56 to 76; sequence LSVTLTGGAMFVGLMVGGVLA. Residues 77–83 lie on the Cytoplasmic side of the membrane; that stretch reads DRYERKK. The chain crosses the membrane as a helical span at residues 84 to 104; it reads VILLARGTCGIGFIGLCLNAL. The Periplasmic portion of the chain corresponds to 105–109; that stretch reads LPEPS. Residues 110–130 traverse the membrane as a helical segment; sequence LLAIYLLGLWDGFFASLGVTA. The Cytoplasmic segment spans residues 131 to 156; sequence LLAATPALVGRENLMQAGAITMLTVR. A helical transmembrane segment spans residues 157-177; it reads LGSVISPMIGGLLLATGGVAW. Residue Asn178 is a topological domain, periplasmic. A helical transmembrane segment spans residues 179-199; it reads YGLAAAGTFITLLPLLSLPAL. Residues 200 to 218 are Cytoplasmic-facing; it reads PPPPQPREHPLKSLLAGFR. A helical membrane pass occupies residues 219-239; sequence FLLASPLVGGIALLGGLLTMA. At 240–256 the chain is on the periplasmic side; sequence SAVRVLYPALADNWQMS. The chain crosses the membrane as a helical span at residues 257–277; sequence AAQIGFLYAAIPLGAAIGALT. Residues 278–287 lie on the Cytoplasmic side of the membrane; sequence SGKLAHSVRP. The helical transmembrane segment at 288–307 threads the bilayer; the sequence is GLLMLLSTLGAFLAISLFGL. Residues 308-313 lie on the Periplasmic side of the membrane; sequence MPMWIL. A helical transmembrane segment spans residues 314–336; it reads GVVCLALFGWLSAVSSLLQYTML. Topologically, residues 337–356 are cytoplasmic; sequence QTQTPEAMLGRINGLWTAQN. A helical membrane pass occupies residues 357–377; that stretch reads VTGDAIGAALLGGLGAMMTPV. Ala378 is a topological domain (periplasmic). The chain crosses the membrane as a helical span at residues 379–399; the sequence is SASASGFGLLIIGVLLLLVLV. Residues 400–416 are Cytoplasmic-facing; sequence ELRRFRQTPPQVTASDS.

Belongs to the major facilitator superfamily. EntS (TC 2.A.1.38) family.

It localises to the cell inner membrane. Its function is as follows. Component of an export pathway for enterobactin. In Escherichia coli O45:K1 (strain S88 / ExPEC), this protein is Enterobactin exporter EntS.